The sequence spans 158 residues: SsrA-binding protein (158 aa).

The protein belongs to the SmpB family.

Its subcellular location is the cytoplasm. Functionally, required for rescue of stalled ribosomes mediated by trans-translation. Binds to transfer-messenger RNA (tmRNA), required for stable association of tmRNA with ribosomes. tmRNA and SmpB together mimic tRNA shape, replacing the anticodon stem-loop with SmpB. tmRNA is encoded by the ssrA gene; the 2 termini fold to resemble tRNA(Ala) and it encodes a 'tag peptide', a short internal open reading frame. During trans-translation Ala-aminoacylated tmRNA acts like a tRNA, entering the A-site of stalled ribosomes, displacing the stalled mRNA. The ribosome then switches to translate the ORF on the tmRNA; the nascent peptide is terminated with the 'tag peptide' encoded by the tmRNA and targeted for degradation. The ribosome is freed to recommence translation, which seems to be the essential function of trans-translation. The sequence is that of SsrA-binding protein from Caldicellulosiruptor saccharolyticus (strain ATCC 43494 / DSM 8903 / Tp8T 6331).